A 270-amino-acid polypeptide reads, in one-letter code: Shikimate dehydrogenase (NADP(+)) (270 aa).

Shikimate contacts are provided by residues Ser-14–Ser-16 and Thr-60. Catalysis depends on Lys-64, which acts as the Proton acceptor. Glu-76 serves as a coordination point for NADP(+). Positions 85 and 101 each coordinate shikimate. NADP(+) contacts are provided by residues Gly-125–Ala-129, Asn-149–Arg-154, and Met-213. Tyr-215 is a binding site for shikimate. Gly-236 lines the NADP(+) pocket.

The protein belongs to the shikimate dehydrogenase family. As to quaternary structure, homodimer.

The catalysed reaction is shikimate + NADP(+) = 3-dehydroshikimate + NADPH + H(+). Its pathway is metabolic intermediate biosynthesis; chorismate biosynthesis; chorismate from D-erythrose 4-phosphate and phosphoenolpyruvate: step 4/7. Involved in the biosynthesis of the chorismate, which leads to the biosynthesis of aromatic amino acids. Catalyzes the reversible NADPH linked reduction of 3-dehydroshikimate (DHSA) to yield shikimate (SA). This is Shikimate dehydrogenase (NADP(+)) from Stutzerimonas stutzeri (strain A1501) (Pseudomonas stutzeri).